The chain runs to 90 residues: Small ribosomal subunit protein uS15 (90 aa).

This sequence belongs to the universal ribosomal protein uS15 family. As to quaternary structure, part of the 30S ribosomal subunit. Forms a bridge to the 50S subunit in the 70S ribosome, contacting the 23S rRNA.

One of the primary rRNA binding proteins, it binds directly to 16S rRNA where it helps nucleate assembly of the platform of the 30S subunit by binding and bridging several RNA helices of the 16S rRNA. In terms of biological role, forms an intersubunit bridge (bridge B4) with the 23S rRNA of the 50S subunit in the ribosome. The sequence is that of Small ribosomal subunit protein uS15 from Blochmanniella floridana.